Consider the following 621-residue polypeptide: 1-deoxy-D-xylulose-5-phosphate synthase (621 aa).

Residues His80 and 121–123 contribute to the thiamine diphosphate site; that span reads GHS. Asp152 serves as a coordination point for Mg(2+). Thiamine diphosphate-binding positions include 153 to 154, Asn181, Tyr288, and Glu370; that span reads GA. Position 181 (Asn181) interacts with Mg(2+).

It belongs to the transketolase family. DXPS subfamily. Homodimer. It depends on Mg(2+) as a cofactor. Thiamine diphosphate is required as a cofactor.

It catalyses the reaction D-glyceraldehyde 3-phosphate + pyruvate + H(+) = 1-deoxy-D-xylulose 5-phosphate + CO2. It functions in the pathway metabolic intermediate biosynthesis; 1-deoxy-D-xylulose 5-phosphate biosynthesis; 1-deoxy-D-xylulose 5-phosphate from D-glyceraldehyde 3-phosphate and pyruvate: step 1/1. Catalyzes the acyloin condensation reaction between C atoms 2 and 3 of pyruvate and glyceraldehyde 3-phosphate to yield 1-deoxy-D-xylulose-5-phosphate (DXP). The chain is 1-deoxy-D-xylulose-5-phosphate synthase from Vibrio parahaemolyticus serotype O3:K6 (strain RIMD 2210633).